Here is a 283-residue protein sequence, read N- to C-terminus: MEDENTTIIMASLSALSPSHLTNLTHSILSISHHHRRRLGAVLSSPTLFSLTLRHLLSLSLPDKTHLIANHLLSLLHPLLIHRKHHSSYAVTMKLRDLDAVVLLLFLCETHQLHPDVLEASADNWREILGNTYSNNMLSNNSGLWTCDAGILMPYIETLVRCKRFVDIMGGYNHLRRRDQKEGYQVPAARAAVVALRAVEVFNVAASNAGEVECVICKEEMSEGRDVCEMPCQHFFHWKCILPWLSKKNTCPFCRFQLPTDDVFSEIQRLWEILVKSSELHVA.

The transit peptide at 1 to 32 (MEDENTTIIMASLSALSPSHLTNLTHSILSIS) directs the protein to the amyloplast. The segment at 214 to 255 (CVICKEEMSEGRDVCEMPCQHFFHWKCILPWLSKKNTCPFCR) adopts an RING-type; atypical zinc-finger fold.

Auto-ubiquitinated as part of the enzymatic reaction. In terms of tissue distribution, expressed in seedlings, hypocotyls, roots and stems. Present especially in hypocotyl and inflorescence endodermis, as well as in root cap columella, tissues that act as statocytes.

It localises to the plastid. It is found in the amyloplast. The catalysed reaction is S-ubiquitinyl-[E2 ubiquitin-conjugating enzyme]-L-cysteine + [acceptor protein]-L-lysine = [E2 ubiquitin-conjugating enzyme]-L-cysteine + N(6)-ubiquitinyl-[acceptor protein]-L-lysine.. It participates in protein modification; protein ubiquitination. In terms of biological role, E3 ubiquitin-protein ligase which accepts ubiquitin from an E2 ubiquitin-conjugating enzyme in the form of a thioester and then directly transfers the ubiquitin to targeted substrates. Modulates amyloplast dynamics and sedimentation in statocytes during inflorescence, hypocotyl and root gravitropism, probably by regulating amyloplast interaction with actin filaments (AFs) in endodermal cells. This chain is E3 ubiquitin-protein ligase SGR9, amyloplastic (SGR9), found in Arabidopsis thaliana (Mouse-ear cress).